The chain runs to 816 residues: Leucine--tRNA ligase (816 aa).

Positions 40-51 (PYPSGSGLHVGH) match the 'HIGH' region motif. A 'KMSKS' region motif is present at residues 576–580 (KMSKS). Lys-579 lines the ATP pocket.

The protein belongs to the class-I aminoacyl-tRNA synthetase family.

It is found in the cytoplasm. It carries out the reaction tRNA(Leu) + L-leucine + ATP = L-leucyl-tRNA(Leu) + AMP + diphosphate. This is Leucine--tRNA ligase from Chlorobium phaeobacteroides (strain DSM 266 / SMG 266 / 2430).